Here is a 93-residue protein sequence, read N- to C-terminus: Small integral membrane protein 36 (93 aa).

A helical transmembrane segment spans residues 14–34 (LIILVASYVILLLVFLVSCVL). A disordered region spans residues 70-93 (SHWARGPSLHLKDPAPLGKKSTVV).

It localises to the membrane. This Mus musculus (Mouse) protein is Small integral membrane protein 36.